Reading from the N-terminus, the 291-residue chain is MQLKKAFWKLASLLPXSLLLFLGGCDKKLAVLNPQGPVAKAQYDLIVWSFLLMSLIIAIVFILFTVILIRYREKPENMDYEPPEQHGNTLLEIIWTLVPVIIVIALSIPTVKATYASEEVPKESKHIKPVEIYVTSANWKWLFSYPEEKIETVNYLNIPAGVPIQFKLTSVGPMNAFWVPELGGMKYTMDGMIMDLYLQADKPGSYLGRSANFSGEGFTHMEFEVEAKTKEKYDKWVKEVQQTAPKLTEDKYNEIVKPGVVGRMTFSSHHLSYVDPKSLEYCDYNYYKNKK.

The N-terminal stretch at 1 to 28 is a signal peptide; sequence MQLKKAFWKLASLLPXSLLLFLGGCDKK. Transmembrane regions (helical) follow at residues 49–69 and 91–111; these read SFLL…VILI and LEII…IPTV.

Belongs to the cytochrome c oxidase subunit 2 family.

It localises to the cell membrane. It catalyses the reaction 2 a quinol + O2 = 2 a quinone + 2 H2O. Its function is as follows. Catalyzes quinol oxidation with the concomitant reduction of oxygen to water. Subunit II transfers the electrons from a quinol to the binuclear center of the catalytic subunit I. The chain is Quinol oxidase subunit 2 from Bacillus cereus (strain ATCC 10987 / NRS 248).